A 259-amino-acid polypeptide reads, in one-letter code: Aspartate/glutamate leucyltransferase (259 aa).

Belongs to the R-transferase family. Bpt subfamily.

The protein resides in the cytoplasm. It catalyses the reaction N-terminal L-glutamyl-[protein] + L-leucyl-tRNA(Leu) = N-terminal L-leucyl-L-glutamyl-[protein] + tRNA(Leu) + H(+). The catalysed reaction is N-terminal L-aspartyl-[protein] + L-leucyl-tRNA(Leu) = N-terminal L-leucyl-L-aspartyl-[protein] + tRNA(Leu) + H(+). Functionally, functions in the N-end rule pathway of protein degradation where it conjugates Leu from its aminoacyl-tRNA to the N-termini of proteins containing an N-terminal aspartate or glutamate. This is Aspartate/glutamate leucyltransferase from Rhizobium meliloti (strain 1021) (Ensifer meliloti).